The following is a 285-amino-acid chain: Dermonecrotic toxin LlSicTox-alphaIII2 (285 aa).

His12 is a catalytic residue. Mg(2+) is bound by residues Glu32 and Asp34. His47 (nucleophile) is an active-site residue. Residues Cys51 and Cys57 are joined by a disulfide bond. Mg(2+) is bound at residue Asp91.

It belongs to the arthropod phospholipase D family. Class I subfamily. Mg(2+) is required as a cofactor. Expressed by the venom gland.

It is found in the secreted. It catalyses the reaction an N-(acyl)-sphingosylphosphocholine = an N-(acyl)-sphingosyl-1,3-cyclic phosphate + choline. It carries out the reaction an N-(acyl)-sphingosylphosphoethanolamine = an N-(acyl)-sphingosyl-1,3-cyclic phosphate + ethanolamine. The catalysed reaction is a 1-acyl-sn-glycero-3-phosphocholine = a 1-acyl-sn-glycero-2,3-cyclic phosphate + choline. The enzyme catalyses a 1-acyl-sn-glycero-3-phosphoethanolamine = a 1-acyl-sn-glycero-2,3-cyclic phosphate + ethanolamine. Functionally, dermonecrotic toxins cleave the phosphodiester linkage between the phosphate and headgroup of certain phospholipids (sphingolipid and lysolipid substrates), forming an alcohol (often choline) and a cyclic phosphate. This toxin acts on sphingomyelin (SM) (228.2 U/mg). It may also act on ceramide phosphoethanolamine (CPE), lysophosphatidylcholine (LPC) and lysophosphatidylethanolamine (LPE), but not on lysophosphatidylserine (LPS), and lysophosphatidylglycerol (LPG). It acts by transphosphatidylation, releasing exclusively cyclic phosphate products as second products. Induces dermonecrosis, hemolysis, increased vascular permeability, edema, inflammatory response, and platelet aggregation. Is lethal to mice. The sequence is that of Dermonecrotic toxin LlSicTox-alphaIII2 from Loxosceles laeta (South American recluse spider).